Here is a 70-residue protein sequence, read N- to C-terminus: Small, acid-soluble spore protein alpha (70 aa).

Belongs to the alpha/beta-type SASP family.

Its function is as follows. SASP are bound to spore DNA. They are double-stranded DNA-binding proteins that cause DNA to change to an a-like conformation. They protect the DNA backbone from chemical and enzymatic cleavage and are thus involved in dormant spore's high resistance to UV light. This Paraclostridium bifermentans (Clostridium bifermentans) protein is Small, acid-soluble spore protein alpha.